Reading from the N-terminus, the 552-residue chain is Glutamine-dependent NAD(+) synthetase (552 aa).

In terms of domain architecture, CN hydrolase spans F5–R245. E45 (proton acceptor; for glutaminase activity) is an active-site residue. K113 (for glutaminase activity) is an active-site residue. The Nucleophile; for glutaminase activity role is filled by C149. Residues S175 and K181 each coordinate L-glutamine. The segment at L275 to S552 is ligase. An ATP-binding site is contributed by G290–S297. N373 contributes to the deamido-NAD(+) binding site. T397 contributes to the ATP binding site. Residues E402 and K521 each coordinate deamido-NAD(+).

It in the C-terminal section; belongs to the NAD synthetase family.

It catalyses the reaction deamido-NAD(+) + L-glutamine + ATP + H2O = L-glutamate + AMP + diphosphate + NAD(+) + H(+). The protein operates within cofactor biosynthesis; NAD(+) biosynthesis; NAD(+) from deamido-NAD(+) (L-Gln route): step 1/1. Catalyzes the ATP-dependent amidation of deamido-NAD to form NAD. Uses L-glutamine as a nitrogen source. The chain is Glutamine-dependent NAD(+) synthetase from Rhodobacter capsulatus (Rhodopseudomonas capsulata).